The chain runs to 313 residues: Nucleotide-binding protein Swit_0399 (313 aa).

An ATP-binding site is contributed by 20–27 (GMSGSGKK). Position 73 to 76 (73 to 76 (DSRT)) interacts with GTP. Residues 289-313 (PTVRHRDLTRQKSNAEESTVPGVGS) are disordered. Residues 292–303 (RHRDLTRQKSNA) are compositionally biased toward basic and acidic residues.

It belongs to the RapZ-like family.

Its function is as follows. Displays ATPase and GTPase activities. In Rhizorhabdus wittichii (strain DSM 6014 / CCUG 31198 / JCM 15750 / NBRC 105917 / EY 4224 / RW1) (Sphingomonas wittichii), this protein is Nucleotide-binding protein Swit_0399.